A 247-amino-acid polypeptide reads, in one-letter code: Cell division protein ZapD (247 aa).

It belongs to the ZapD family. As to quaternary structure, interacts with FtsZ.

It is found in the cytoplasm. In terms of biological role, cell division factor that enhances FtsZ-ring assembly. Directly interacts with FtsZ and promotes bundling of FtsZ protofilaments, with a reduction in FtsZ GTPase activity. This is Cell division protein ZapD from Salmonella dublin (strain CT_02021853).